The chain runs to 542 residues: E3 ubiquitin-protein ligase RNF217 (542 aa).

Disordered regions lie at residues 1-140 and 176-216; these read MGEE…TRVG and APAS…TDSL. The span at 37–50 shows a compositional bias: low complexity; it reads SARAPPLRAASAEP. The segment covering 122-132 has biased composition (acidic residues); that stretch reads DEQQEAPPGEE. Residues 185–196 are compositionally biased toward pro residues; the sequence is PASPPGAPPVLN. Over residues 197–213 the composition is skewed to low complexity; that stretch reads PPSTRSSFPSPRLSLPT. The TRIAD supradomain stretch occupies residues 259–478; sequence MVLMCRVCLE…LSIFGCKYRY (220 aa). Residues C263, C266, C283, C286, C383, C386, H391, C396, C423, and C426 each contribute to the Zn(2+) site. The RING-type 1 zinc-finger motif lies at 263-309; the sequence is CRVCLEDKPIKPLPCCKKAVCEECLKVYLSAQVQLGQVEIKCPITEC. Residues 328–396 form an IBR-type zinc finger; the sequence is IKYKYFLELG…HSPWHEGVNC (69 aa). The RING-type 2; atypical zinc finger occupies 423-452; that stretch reads CPKCKIHIQRTEGCDHMTCSQCNTNFCYRC. C436 is an active-site residue. Residues C441, C444, C449, C452, H465, and C474 each contribute to the Zn(2+) site. The chain crosses the membrane as a helical span at residues 503 to 523; that stretch reads LIMVLGLALGAIAVVIGLFVF.

This sequence belongs to the RBR family. RNF217 subfamily. As to quaternary structure, interacts with HAX1. As to expression, mainly expressed in testis and skeletal muscle.

The protein localises to the membrane. It is found in the cytoplasm. The enzyme catalyses [E2 ubiquitin-conjugating enzyme]-S-ubiquitinyl-L-cysteine + [acceptor protein]-L-lysine = [E2 ubiquitin-conjugating enzyme]-L-cysteine + [acceptor protein]-N(6)-ubiquitinyl-L-lysine.. It functions in the pathway protein modification; protein ubiquitination. Functionally, E3 ubiquitin-protein ligase which accepts ubiquitin from E2 ubiquitin-conjugating enzymes in the form of a thioester and then directly transfers the ubiquitin to targeted substrates. Mediates the degradation of the iron exporter ferroportin/SLC40A1 and thus regulates iron homeostasis. The polypeptide is E3 ubiquitin-protein ligase RNF217 (RNF217) (Homo sapiens (Human)).